The sequence spans 64 residues: Alpha-mammal toxin BmK-M8 (64 aa).

An LCN-type CS-alpha/beta domain is found at 2-64 (RDAYIADSEN…ERIKEPGKCG (63 aa)). 4 disulfides stabilise this stretch: Cys12–Cys63, Cys16–Cys36, Cys22–Cys46, and Cys26–Cys48.

Belongs to the long (4 C-C) scorpion toxin superfamily. Sodium channel inhibitor family. Alpha subfamily. In terms of tissue distribution, expressed by the venom gland.

The protein localises to the secreted. In terms of biological role, alpha toxins bind voltage-independently at site-3 of sodium channels (Nav) and inhibit the inactivation of the activated channels, thereby blocking neuronal transmission. This acidic toxin has a weak toxicity and is active against mammals. The protein is Alpha-mammal toxin BmK-M8 of Olivierus martensii (Manchurian scorpion).